Consider the following 20-residue polypeptide: Pregnancy-associated glycoprotein 57 (20 aa).

The protein belongs to the peptidase A1 family. Glycosylated.

It is found in the secreted. The protein is Pregnancy-associated glycoprotein 57 of Ovis aries (Sheep).